The sequence spans 211 residues: Large ribosomal subunit protein uL4 (211 aa).

Polar residues predominate over residues 41–53; sequence QAHSRQGTASTLT. The disordered stretch occupies residues 41–85; that stretch reads QAHSRQGTASTLTRAEVRGGGRKPYKQKGTGRARQGSIRTPLRPG. Residues 60-71 are compositionally biased toward basic residues; the sequence is GGRKPYKQKGTG.

Belongs to the universal ribosomal protein uL4 family. In terms of assembly, part of the 50S ribosomal subunit.

One of the primary rRNA binding proteins, this protein initially binds near the 5'-end of the 23S rRNA. It is important during the early stages of 50S assembly. It makes multiple contacts with different domains of the 23S rRNA in the assembled 50S subunit and ribosome. Its function is as follows. Forms part of the polypeptide exit tunnel. The polypeptide is Large ribosomal subunit protein uL4 (Prochlorococcus marinus (strain SARG / CCMP1375 / SS120)).